Consider the following 251-residue polypeptide: PF03932 family protein CutC (251 aa).

It belongs to the CutC family.

The protein resides in the cytoplasm. The protein is PF03932 family protein CutC of Edwardsiella ictaluri (strain 93-146).